A 268-amino-acid polypeptide reads, in one-letter code: Undecaprenyl-diphosphatase (268 aa).

Helical transmembrane passes span 5-25 (TIAQALMLGVLEGFTEFIPVS), 43-63 (GKAFEILIQLGAILAVLSVYA), 84-104 (LGILIAFLPAAIIGVVAYQII), 107-127 (VLFETPLLICTMLILGGIVLL), 184-204 (AAEFSFFLAMPTMAGAFAYDL), 214-234 (ADLQIIGVGFIAAFVAAVLVV), and 247-267 (ALFGWWRIFIGVLGLIGVLVL).

The protein belongs to the UppP family.

It is found in the cell inner membrane. It catalyses the reaction di-trans,octa-cis-undecaprenyl diphosphate + H2O = di-trans,octa-cis-undecaprenyl phosphate + phosphate + H(+). Catalyzes the dephosphorylation of undecaprenyl diphosphate (UPP). Confers resistance to bacitracin. The protein is Undecaprenyl-diphosphatase of Chelativorans sp. (strain BNC1).